We begin with the raw amino-acid sequence, 208 residues long: Ribonuclease HII (208 aa).

One can recognise an RNase H type-2 domain in the interval 13–202 (DLVAGVDEVG…VRQAYEAREA (190 aa)). The a divalent metal cation site is built by D19, E20, and D111.

It belongs to the RNase HII family. Requires Mn(2+) as cofactor. It depends on Mg(2+) as a cofactor.

It is found in the cytoplasm. It carries out the reaction Endonucleolytic cleavage to 5'-phosphomonoester.. Its function is as follows. Endonuclease that specifically degrades the RNA of RNA-DNA hybrids. This Pseudomonas fluorescens (strain ATCC BAA-477 / NRRL B-23932 / Pf-5) protein is Ribonuclease HII.